Reading from the N-terminus, the 93-residue chain is Histone H2B (93 aa).

Residues 1 to 12 are compositionally biased toward low complexity; it reads MPEPAKSAPAPK. Residues 1-31 are disordered; it reads MPEPAKSAPAPKKGSKKAVTKTQKKGDKKRX. Residues K6 and K13 each carry the N6-acetyllysine modification. The segment covering 13-28 has biased composition (basic residues); it reads KGSKKAVTKTQKKGDK. S15 carries the phosphoserine modification. K16 and K21 each carry N6-acetyllysine.

This sequence belongs to the histone H2B family. As to quaternary structure, the nucleosome is a histone octamer containing two molecules each of H2A, H2B, H3 and H4 assembled in one H3-H4 heterotetramer and two H2A-H2B heterodimers. The octamer wraps approximately 147 bp of DNA. In terms of processing, monoubiquitination at the C-terminal Lys gives a specific tag for epigenetic transcriptional activation and is also prerequisite for histone H3 'Lys-4' and 'Lys-79' methylation. Post-translationally, phosphorylated on Ser-15 during apoptosis; which facilitates apoptotic chromatin condensation.

It is found in the nucleus. The protein resides in the chromosome. Functionally, core component of nucleosome. Nucleosomes wrap and compact DNA into chromatin, limiting DNA accessibility to the cellular machineries which require DNA as a template. Histones thereby play a central role in transcription regulation, DNA repair, DNA replication and chromosomal stability. DNA accessibility is regulated via a complex set of post-translational modifications of histones, also called histone code, and nucleosome remodeling. The polypeptide is Histone H2B (Crocodylus niloticus (Nile crocodile)).